The chain runs to 46 residues: Succinate dehydrogenase subunit 8, mitochondrial (46 aa).

In terms of assembly, component of complex II composed of eight subunits in plants: four classical SDH subunits SDH1, SDH2, SDH3 and SDH4 (a flavoprotein (FP), an iron-sulfur protein (IP), and a cytochrome b composed of a large and a small subunit.), as well as four subunits unknown in mitochondria from bacteria and heterotrophic eukaryotes.

The protein resides in the mitochondrion inner membrane. It participates in carbohydrate metabolism; tricarboxylic acid cycle. This chain is Succinate dehydrogenase subunit 8, mitochondrial, found in Arabidopsis thaliana (Mouse-ear cress).